The following is a 105-amino-acid chain: Large ribosomal subunit protein uL24 (105 aa).

Belongs to the universal ribosomal protein uL24 family. Part of the 50S ribosomal subunit.

In terms of biological role, one of two assembly initiator proteins, it binds directly to the 5'-end of the 23S rRNA, where it nucleates assembly of the 50S subunit. Functionally, one of the proteins that surrounds the polypeptide exit tunnel on the outside of the subunit. The sequence is that of Large ribosomal subunit protein uL24 from Hahella chejuensis (strain KCTC 2396).